Consider the following 310-residue polypeptide: Vomeronasal type-1 receptor 40 (310 aa).

Residues 1–20 lie on the Extracellular side of the membrane; the sequence is MNKANMLRTDKDMQIILFSE. A helical membrane pass occupies residues 21-41; that stretch reads VSVGISANSILFIAHVCMILG. The Cytoplasmic portion of the chain corresponds to 42-50; sequence ENRPKPIDL. Residues 51 to 71 form a helical membrane-spanning segment; that stretch reads YIAFLSLTQLMLLITMGLIAV. Residues 72 to 93 lie on the Extracellular side of the membrane; that stretch reads DMFLSQGIWDSTTCQSLIYLHR. Cys-85 and Cys-172 are joined by a disulfide. A helical membrane pass occupies residues 94–114; it reads LLRGLSLCATCLLNILWTITL. The Cytoplasmic segment spans residues 115–134; sequence SSRSFCSTKFKHKSPHHISG. Residues 135–155 traverse the membrane as a helical segment; it reads AFIFFCVLYMSFSSHLFISII. Topologically, residues 156–190 are extracellular; sequence ATHNLTSENFIYVTQSCSLLPLSYSRTSMFSAPMA. The N-linked (GlcNAc...) asparagine glycan is linked to Asn-159. Residues 191-211 form a helical membrane-spanning segment; that stretch reads IREAFLVSLMALSSGYMVALL. At 212-238 the chain is on the cytoplasmic side; it reads WRHKKQAQHLHSTSLSSKASPEQRATR. A helical transmembrane segment spans residues 239–259; sequence TILLLMSFFVVLYILENAVFY. The Extracellular portion of the chain corresponds to 260 to 268; the sequence is SRIKFKDGS. Residues 269–289 traverse the membrane as a helical segment; sequence ILYCVQIILCHSYATVNPFVF. Residues 290-310 lie on the Cytoplasmic side of the membrane; it reads ICTEKHIIKFWESKCGRIVNI.

The protein belongs to the G-protein coupled receptor 1 family.

The protein resides in the cell membrane. In terms of biological role, putative pheromone receptor implicated in the regulation of social and reproductive behavior. This Mus musculus (Mouse) protein is Vomeronasal type-1 receptor 40 (Vmn1r40).